Reading from the N-terminus, the 45-residue chain is Peroxidase 3 (45 aa).

It belongs to the peroxidase family. Classical plant (class III) peroxidase subfamily. It depends on heme b as a cofactor. Ca(2+) serves as cofactor.

It is found in the secreted. It carries out the reaction 2 a phenolic donor + H2O2 = 2 a phenolic radical donor + 2 H2O. Removal of H(2)O(2), oxidation of toxic reductants, biosynthesis and degradation of lignin, suberization, auxin catabolism, response to environmental stresses such as wounding, pathogen attack and oxidative stress. These functions might be dependent on each isozyme/isoform in each plant tissue. The polypeptide is Peroxidase 3 (Capsicum annuum (Capsicum pepper)).